A 104-amino-acid polypeptide reads, in one-letter code: Pole-localizer protein TmaR (104 aa).

Coiled-coil stretches lie at residues 13 to 43 (RKNKLKRELLDNEKKVRDNRKRVELLENLLD) and 76 to 96 (SAEISKARRDISRRIRELTEE).

The protein belongs to the pole-localizer TmaR family.

It localises to the cytoplasm. In terms of biological role, pole-localizer protein involved in the regulation of several cellular processes. This Vibrio vulnificus (strain CMCP6) protein is Pole-localizer protein TmaR.